We begin with the raw amino-acid sequence, 451 residues long: Phenylalanine--tRNA ligase, mitochondrial (451 aa).

Residues 157 to 160, R179, 186 to 188, and 193 to 195 each bind substrate; these read SAHQ, QHY, and QLE. K202 carries the N6-acetyllysine modification. Positions 287 and 312 each coordinate substrate. The FDX-ACB domain maps to 358 to 450; the sequence is SKYPAVFNDI…AVQLLGVEGR (93 aa).

It belongs to the class-II aminoacyl-tRNA synthetase family. Monomer.

It is found in the mitochondrion matrix. Its subcellular location is the mitochondrion. It carries out the reaction tRNA(Phe) + L-phenylalanine + ATP = L-phenylalanyl-tRNA(Phe) + AMP + diphosphate + H(+). Is responsible for the charging of tRNA(Phe) with phenylalanine in mitochondrial translation. To a lesser extent, also catalyzes direct attachment of m-Tyr (an oxidized version of Phe) to tRNA(Phe), thereby opening the way for delivery of the misacylated tRNA to the ribosome and incorporation of ROS-damaged amino acid into proteins. The protein is Phenylalanine--tRNA ligase, mitochondrial (Fars2) of Mus musculus (Mouse).